We begin with the raw amino-acid sequence, 418 residues long: UDP-N-acetylglucosamine 1-carboxyvinyltransferase (418 aa).

22–23 is a binding site for phosphoenolpyruvate; the sequence is KN. Arg92 is a binding site for UDP-N-acetyl-alpha-D-glucosamine. Cys116 serves as the catalytic Proton donor. The residue at position 116 (Cys116) is a 2-(S-cysteinyl)pyruvic acid O-phosphothioketal. UDP-N-acetyl-alpha-D-glucosamine-binding positions include 121-125, Asp305, and Leu327; that span reads RPIDL.

This sequence belongs to the EPSP synthase family. MurA subfamily.

Its subcellular location is the cytoplasm. It carries out the reaction phosphoenolpyruvate + UDP-N-acetyl-alpha-D-glucosamine = UDP-N-acetyl-3-O-(1-carboxyvinyl)-alpha-D-glucosamine + phosphate. It functions in the pathway cell wall biogenesis; peptidoglycan biosynthesis. In terms of biological role, cell wall formation. Adds enolpyruvyl to UDP-N-acetylglucosamine. In Campylobacter jejuni subsp. doylei (strain ATCC BAA-1458 / RM4099 / 269.97), this protein is UDP-N-acetylglucosamine 1-carboxyvinyltransferase.